Here is a 209-residue protein sequence, read N- to C-terminus: Glutathione S-transferase 1-1 (209 aa).

Residues 1–81 (MADFYYLPGS…YLVEKYGKTD (81 aa)) enclose the GST N-terminal domain. Glutathione-binding positions include 51 to 53 (HTI) and 65 to 67 (ESR). Positions 87-209 (CPKKRAVINQ…GCLEFKKYFE (123 aa)) constitute a GST C-terminal domain.

The protein belongs to the GST superfamily. Theta family. In terms of assembly, homodimer.

It carries out the reaction RX + glutathione = an S-substituted glutathione + a halide anion + H(+). Its function is as follows. Conjugation of reduced glutathione to a wide number of exogenous and endogenous hydrophobic electrophiles. The polypeptide is Glutathione S-transferase 1-1 (GstD1) (Drosophila yakuba (Fruit fly)).